Reading from the N-terminus, the 449-residue chain is Tapasin (449 aa).

The signal sequence occupies residues 1–20; the sequence is MKPLSLLLAVASALGTAVSA. Over 21–413 the chain is Lumenal; sequence GPAVIECWMV…GLSGPSLEDS (393 aa). Cysteine 27 and cysteine 91 are oxidised to a cystine. Asparagine 253 carries N-linked (GlcNAc...) asparagine glycosylation. Residues 292–399 enclose the Ig-like C1-type domain; the sequence is PKISLTPAPL…PTLGRSAEVT (108 aa). Cysteine 315 and cysteine 382 form a disulfide bridge. Residues 414–434 form a helical membrane-spanning segment; the sequence is VGLFLSAFLLLGLIKALGWVA. Residues 435–449 lie on the Cytoplasmic side of the membrane; it reads ASRSTSKDPKEKKAQ.

Heterodimer with PDIA3; disulfide-linked. Obligatory mediator for the interaction between newly assembled MHC class I molecules, calreticulin, PDIA3 and TAP. Up to 4 MHC class I/tapasin complexes bind to 1 TAP. Interacts with HLA-G-B2M complex; this interaction is required for loading of high affinity peptides. On its own or as part of MHC class I peptide loading complex, interacts with ligand-free MR1 or MR1-B2M complex, providing for stable MR1 pools ready for metabolite antigen processing.

It is found in the endoplasmic reticulum membrane. In terms of biological role, involved in the association of MHC class I with transporter associated with antigen processing (TAP) and in the assembly of MHC class I with peptide (peptide loading). In Canis lupus familiaris (Dog), this protein is Tapasin (TAPBP).